Reading from the N-terminus, the 502-residue chain is Glycerol kinase (502 aa).

ADP is bound at residue threonine 14. The ATP site is built by threonine 14, threonine 15, and serine 16. Threonine 14 lines the sn-glycerol 3-phosphate pocket. Residue arginine 18 participates in ADP binding. Arginine 84, glutamate 85, tyrosine 136, and aspartate 246 together coordinate sn-glycerol 3-phosphate. The glycerol site is built by arginine 84, glutamate 85, tyrosine 136, aspartate 246, and glutamine 247. The ADP site is built by threonine 268 and glycine 311. ATP is bound by residues threonine 268, glycine 311, glutamine 315, and glycine 412. Residues glycine 412 and asparagine 416 each coordinate ADP.

The protein belongs to the FGGY kinase family. As to quaternary structure, homotetramer and homodimer (in equilibrium). Heterodimer with EIIA-Glc. Binds 1 zinc ion per glycerol kinase EIIA-Glc dimer. The zinc ion is important for dimerization.

It carries out the reaction glycerol + ATP = sn-glycerol 3-phosphate + ADP + H(+). Its pathway is polyol metabolism; glycerol degradation via glycerol kinase pathway; sn-glycerol 3-phosphate from glycerol: step 1/1. With respect to regulation, activity of this regulatory enzyme is affected by several metabolites. Allosterically and non-competitively inhibited by fructose 1,6-bisphosphate (FBP) and unphosphorylated phosphocarrier protein EIIA-Glc (III-Glc), an integral component of the bacterial phosphotransferase (PTS) system. Functionally, key enzyme in the regulation of glycerol uptake and metabolism. Catalyzes the phosphorylation of glycerol to yield sn-glycerol 3-phosphate. This Escherichia coli O8 (strain IAI1) protein is Glycerol kinase.